The chain runs to 295 residues: Protoheme IX farnesyltransferase (295 aa).

The next 9 membrane-spanning stretches (helical) occupy residues 7 to 27, 34 to 54, 78 to 98, 106 to 126, 131 to 151, 161 to 181, 207 to 227, 228 to 248, and 263 to 283; these read VTKP…FLLA, VPLF…GCVF, LIAP…GIAL, LAAL…SLYM, VYGT…GYCA, LILL…IAIF, ITLY…GGYA, GYKY…MALS, and LFMF…VDFQ.

The protein belongs to the UbiA prenyltransferase family. Protoheme IX farnesyltransferase subfamily.

The protein resides in the cell inner membrane. The catalysed reaction is heme b + (2E,6E)-farnesyl diphosphate + H2O = Fe(II)-heme o + diphosphate. It participates in porphyrin-containing compound metabolism; heme O biosynthesis; heme O from protoheme: step 1/1. In terms of biological role, converts heme B (protoheme IX) to heme O by substitution of the vinyl group on carbon 2 of heme B porphyrin ring with a hydroxyethyl farnesyl side group. The polypeptide is Protoheme IX farnesyltransferase (Aeromonas salmonicida (strain A449)).